The primary structure comprises 441 residues: ATP-dependent protease ATPase subunit HslU (441 aa).

ATP contacts are provided by residues isoleucine 18, 60–65 (GVGKTE), aspartate 254, glutamate 319, and arginine 391.

Belongs to the ClpX chaperone family. HslU subfamily. As to quaternary structure, a double ring-shaped homohexamer of HslV is capped on each side by a ring-shaped HslU homohexamer. The assembly of the HslU/HslV complex is dependent on binding of ATP.

The protein resides in the cytoplasm. In terms of biological role, ATPase subunit of a proteasome-like degradation complex; this subunit has chaperone activity. The binding of ATP and its subsequent hydrolysis by HslU are essential for unfolding of protein substrates subsequently hydrolyzed by HslV. HslU recognizes the N-terminal part of its protein substrates and unfolds these before they are guided to HslV for hydrolysis. This is ATP-dependent protease ATPase subunit HslU from Shewanella frigidimarina (strain NCIMB 400).